The sequence spans 136 residues: Putative pre-16S rRNA nuclease (136 aa).

This sequence belongs to the YqgF nuclease family.

The protein resides in the cytoplasm. Could be a nuclease involved in processing of the 5'-end of pre-16S rRNA. The sequence is that of Putative pre-16S rRNA nuclease from Francisella tularensis subsp. mediasiatica (strain FSC147).